Reading from the N-terminus, the 354-residue chain is Methylthioribose-1-phosphate isomerase (354 aa).

Residues R58–A60, R101, and Q204 each bind substrate. Catalysis depends on D245, which acts as the Proton donor. N255–K256 is a substrate binding site.

The protein belongs to the eIF-2B alpha/beta/delta subunits family. MtnA subfamily.

It catalyses the reaction 5-(methylsulfanyl)-alpha-D-ribose 1-phosphate = 5-(methylsulfanyl)-D-ribulose 1-phosphate. Its pathway is amino-acid biosynthesis; L-methionine biosynthesis via salvage pathway; L-methionine from S-methyl-5-thio-alpha-D-ribose 1-phosphate: step 1/6. Its function is as follows. Catalyzes the interconversion of methylthioribose-1-phosphate (MTR-1-P) into methylthioribulose-1-phosphate (MTRu-1-P). The sequence is that of Methylthioribose-1-phosphate isomerase from Xanthomonas euvesicatoria pv. vesicatoria (strain 85-10) (Xanthomonas campestris pv. vesicatoria).